The primary structure comprises 102 residues: NADH-quinone oxidoreductase subunit K (102 aa).

3 consecutive transmembrane segments (helical) span residues 5–25 (LEHYLTVAAILFTLGIFGIFL), 31–51 (IVILMSIELMLLAVNINLVAF), and 66–86 (FVLTVAAAEAAIGLAILVVFF).

This sequence belongs to the complex I subunit 4L family. In terms of assembly, NDH-1 is composed of 14 different subunits. Subunits NuoA, H, J, K, L, M, N constitute the membrane sector of the complex.

It is found in the cell inner membrane. It carries out the reaction a quinone + NADH + 5 H(+)(in) = a quinol + NAD(+) + 4 H(+)(out). In terms of biological role, NDH-1 shuttles electrons from NADH, via FMN and iron-sulfur (Fe-S) centers, to quinones in the respiratory chain. The immediate electron acceptor for the enzyme in this species is believed to be ubiquinone. Couples the redox reaction to proton translocation (for every two electrons transferred, four hydrogen ions are translocated across the cytoplasmic membrane), and thus conserves the redox energy in a proton gradient. The chain is NADH-quinone oxidoreductase subunit K from Parvibaculum lavamentivorans (strain DS-1 / DSM 13023 / NCIMB 13966).